The primary structure comprises 356 residues: Phosphoserine aminotransferase (356 aa).

Residue Arg41 coordinates L-glutamate. Pyridoxal 5'-phosphate contacts are provided by residues 75-76 (AS), Trp99, Thr147, Asp166, and Gln189. Position 190 is an N6-(pyridoxal phosphate)lysine (Lys190). 231 to 232 (NT) provides a ligand contact to pyridoxal 5'-phosphate.

Belongs to the class-V pyridoxal-phosphate-dependent aminotransferase family. SerC subfamily. Homodimer. Pyridoxal 5'-phosphate serves as cofactor.

It localises to the cytoplasm. The enzyme catalyses O-phospho-L-serine + 2-oxoglutarate = 3-phosphooxypyruvate + L-glutamate. It carries out the reaction 4-(phosphooxy)-L-threonine + 2-oxoglutarate = (R)-3-hydroxy-2-oxo-4-phosphooxybutanoate + L-glutamate. The protein operates within amino-acid biosynthesis; L-serine biosynthesis; L-serine from 3-phospho-D-glycerate: step 2/3. It participates in cofactor biosynthesis; pyridoxine 5'-phosphate biosynthesis; pyridoxine 5'-phosphate from D-erythrose 4-phosphate: step 3/5. Its function is as follows. Catalyzes the reversible conversion of 3-phosphohydroxypyruvate to phosphoserine and of 3-hydroxy-2-oxo-4-phosphonooxybutanoate to phosphohydroxythreonine. This Phocaeicola vulgatus (strain ATCC 8482 / DSM 1447 / JCM 5826 / CCUG 4940 / NBRC 14291 / NCTC 11154) (Bacteroides vulgatus) protein is Phosphoserine aminotransferase.